The chain runs to 182 residues: Keratin, ultra high-sulfur matrix protein (182 aa).

It belongs to the KRTAP type 5 family. As to expression, cuticle layers of differentiating wool follicles.

In terms of biological role, the keratin products of mammalian epidermal derivatives such as wool and hair consist of microfibrils embedded in a rigid matrix of other proteins. The matrix proteins include the high-sulfur and high-tyrosine keratins, having molecular weights of 6-20 kDa, whereas the microfibrils contain the larger, low-sulfur keratins (40-56 kDa). This chain is Keratin, ultra high-sulfur matrix protein, found in Ovis aries (Sheep).